The sequence spans 794 residues: Copper-exporting P-type ATPase (794 aa).

HMA domains follow at residues 5–70 (KKTT…YGVL) and 72–138 (ETAE…YDAQ). Cu(+) contacts are provided by Cys16, Cys19, Cys83, and Cys86. Transmembrane regions (helical) follow at residues 162–182 (IISA…LFGI), 187–207 (IFMN…IIGW), 224–244 (MDVL…YEMV), 250–270 (ANVM…LILF), 411–431 (YFVP…IAFV), and 438–458 (PALV…LGLA). Asp495 acts as the 4-aspartylphosphate intermediate in catalysis. Mg(2+)-binding residues include Asp689 and Asp693. The next 2 helical transmembrane spans lie at 747-766 (LFWA…LGLL) and 770-789 (IAGA…ALRL).

Belongs to the cation transport ATPase (P-type) (TC 3.A.3) family. Type IB subfamily.

The protein resides in the cell membrane. The catalysed reaction is Cu(+)(in) + ATP + H2O = Cu(+)(out) + ADP + phosphate + H(+). Functionally, involved in copper export. In Staphylococcus saprophyticus subsp. saprophyticus (strain ATCC 15305 / DSM 20229 / NCIMB 8711 / NCTC 7292 / S-41), this protein is Copper-exporting P-type ATPase (copA).